A 219-amino-acid polypeptide reads, in one-letter code: Ribose-5-phosphate isomerase A (219 aa).

Residues 28–31 (SGST), 81–84 (DGAD), and 94–97 (KGGG) contribute to the substrate site. Glutamate 103 (proton acceptor) is an active-site residue. Lysine 121 contacts substrate.

This sequence belongs to the ribose 5-phosphate isomerase family. Homodimer.

The catalysed reaction is aldehydo-D-ribose 5-phosphate = D-ribulose 5-phosphate. It participates in carbohydrate degradation; pentose phosphate pathway; D-ribose 5-phosphate from D-ribulose 5-phosphate (non-oxidative stage): step 1/1. Catalyzes the reversible conversion of ribose-5-phosphate to ribulose 5-phosphate. This is Ribose-5-phosphate isomerase A from Haemophilus influenzae (strain PittEE).